We begin with the raw amino-acid sequence, 67 residues long: Probable Sec-independent protein translocase protein TatE (67 aa).

A helical transmembrane segment spans residues 4–21 (ISITKLLVVAALVVLLFG).

Belongs to the TatA/E family. TatE subfamily.

Its subcellular location is the cell inner membrane. In terms of biological role, part of the twin-arginine translocation (Tat) system that transports large folded proteins containing a characteristic twin-arginine motif in their signal peptide across membranes. TatE shares overlapping functions with TatA. This chain is Probable Sec-independent protein translocase protein TatE, found in Enterobacter cloacae subsp. cloacae (strain ATCC 13047 / DSM 30054 / NBRC 13535 / NCTC 10005 / WDCM 00083 / NCDC 279-56).